A 362-amino-acid polypeptide reads, in one-letter code: 3-dehydroquinate synthase (362 aa).

NAD(+) contacts are provided by residues 71–76 (DGEQYK), 105–109 (GVVGD), 129–130 (TT), Lys-142, Lys-151, and 169–172 (CLKT). Positions 184, 247, and 264 each coordinate Zn(2+).

It belongs to the sugar phosphate cyclases superfamily. Dehydroquinate synthase family. Requires Co(2+) as cofactor. It depends on Zn(2+) as a cofactor. The cofactor is NAD(+).

Its subcellular location is the cytoplasm. It carries out the reaction 7-phospho-2-dehydro-3-deoxy-D-arabino-heptonate = 3-dehydroquinate + phosphate. It functions in the pathway metabolic intermediate biosynthesis; chorismate biosynthesis; chorismate from D-erythrose 4-phosphate and phosphoenolpyruvate: step 2/7. Its function is as follows. Catalyzes the conversion of 3-deoxy-D-arabino-heptulosonate 7-phosphate (DAHP) to dehydroquinate (DHQ). The polypeptide is 3-dehydroquinate synthase (Escherichia coli (strain 55989 / EAEC)).